Reading from the N-terminus, the 175-residue chain is NADH-ubiquinone oxidoreductase chain 6 (175 aa).

The next 5 helical transmembrane spans lie at 1–21, 25–45, 47–67, 88–108, and 149–169; these read MMTY…VGFS, SPIY…GIVL, FGGS…MMVV, VVLG…YYVL, and YGTW…VVIM.

The protein belongs to the complex I subunit 6 family. Core subunit of respiratory chain NADH dehydrogenase (Complex I) which is composed of 45 different subunits.

The protein resides in the mitochondrion inner membrane. It catalyses the reaction a ubiquinone + NADH + 5 H(+)(in) = a ubiquinol + NAD(+) + 4 H(+)(out). Core subunit of the mitochondrial membrane respiratory chain NADH dehydrogenase (Complex I) which catalyzes electron transfer from NADH through the respiratory chain, using ubiquinone as an electron acceptor. Essential for the catalytic activity and assembly of complex I. The sequence is that of NADH-ubiquinone oxidoreductase chain 6 (MT-ND6) from Ovis aries (Sheep).